The chain runs to 1178 residues: DNA-directed RNA polymerase subunit beta' (1178 aa).

Residues cysteine 60, cysteine 62, cysteine 75, and cysteine 78 each contribute to the Zn(2+) site. Mg(2+) is bound by residues aspartate 450, aspartate 452, and aspartate 454. Cysteine 795, cysteine 869, cysteine 876, and cysteine 879 together coordinate Zn(2+).

It belongs to the RNA polymerase beta' chain family. The RNAP catalytic core consists of 2 alpha, 1 beta, 1 beta' and 1 omega subunit. When a sigma factor is associated with the core the holoenzyme is formed, which can initiate transcription. Mg(2+) is required as a cofactor. The cofactor is Zn(2+).

It catalyses the reaction RNA(n) + a ribonucleoside 5'-triphosphate = RNA(n+1) + diphosphate. In terms of biological role, DNA-dependent RNA polymerase catalyzes the transcription of DNA into RNA using the four ribonucleoside triphosphates as substrates. The polypeptide is DNA-directed RNA polymerase subunit beta' (Clostridium perfringens (strain ATCC 13124 / DSM 756 / JCM 1290 / NCIMB 6125 / NCTC 8237 / Type A)).